Consider the following 513-residue polypeptide: MEISWGRALWRNFLGQSPDWYKLALIIFLIVNPLIFLISPFVAGWLLVAEFIFTLAMALKCYPLLPGGLLAIEAVFIGMTSAEHVREEVAANLEVLLLLMFMVAGIYFMKQLLLFIFTRLLLSIRSKMLLSLSFCVAAAFLSAFLDALTVVAVVISVAVGFYGIYHRVASSRTEDTDLQDDSHIDKHYNVVLEQFRGFLRSLMMHAGVGTALGGVMTMVGEPQNLIIAKAAGWHFGDFFLRMSPVTVPVLICGLLTCLLVEKLRWFGYGETLPEKVREVLQQFDDQSRHQRTRQDKIRLIVQAIIGVWLVTALALHLAEVGLIGLSVIILATSLTGVTDEHAIGKAFTESLPFTALLTVFFSVVAVIIDQQLFSPIIQFVLQASEHAQLSLFYIFNGLLSSISDNVFVGTIYINEAKAAMESGAITLKQYELLAVAINTGTNLPSVATPNGQAAFLFLLTSALAPLIRLSYGRMVWMALPYTLVLTLVGLLCVEFTLAPVTEWFMQMGWIATL.

The next 12 membrane-spanning stretches (helical) occupy residues 23 to 43 (LALI…PFVA), 52 to 72 (IFTL…LLAI), 97 to 117 (LLLM…LFIF), 120 to 140 (LLLS…AAAF), 144 to 164 (FLDA…FYGI), 202 to 222 (LMMH…VGEP), 238 to 258 (FFLR…LTCL), 303 to 323 (AIIG…VGLI), 348 to 368 (TESL…AVII), 391 to 411 (LFYI…VGTI), 447 to 467 (ATPN…APLI), and 475 to 495 (VWMA…CVEF).

This sequence belongs to the NhaB Na(+)/H(+) (TC 2.A.34) antiporter family.

It is found in the cell inner membrane. It catalyses the reaction 2 Na(+)(in) + 3 H(+)(out) = 2 Na(+)(out) + 3 H(+)(in). Its function is as follows. Na(+)/H(+) antiporter that extrudes sodium in exchange for external protons. The sequence is that of Na(+)/H(+) antiporter NhaB from Shigella flexneri serotype 5b (strain 8401).